Here is a 200-residue protein sequence, read N- to C-terminus: Phosphatidylethanolamine N-methyltransferase B (200 aa).

Over Met1–Asp8 the chain is Lumenal. Residues Leu9–Phe29 constitute an intramembrane region (helical). The Lumenal segment spans residues Glu30–Leu39. Residues Ile40–Ile58 form a helical membrane-spanning segment. Residues Arg59–Gly86 lie on the Cytoplasmic side of the membrane. The helical transmembrane segment at Asp87 to Lys107 threads the bilayer. Residue Ile91–Gly93 coordinates S-adenosyl-L-methionine. Residues Gly108–Asn150 are Lumenal-facing. The chain crosses the membrane as a helical span at residues Gln151–Thr171. Topologically, residues Phe172–Asn200 are cytoplasmic. Residue Glu174–Thr175 participates in S-adenosyl-L-methionine binding.

Belongs to the class VI-like SAM-binding methyltransferase superfamily. PEMT/PEM2 methyltransferase family.

It is found in the endoplasmic reticulum membrane. It localises to the mitochondrion membrane. The enzyme catalyses a 1,2-diacyl-sn-glycero-3-phospho-N-methylethanolamine + S-adenosyl-L-methionine = a 1,2-diacyl-sn-glycero-3-phospho-N,N-dimethylethanolamine + S-adenosyl-L-homocysteine + H(+). It carries out the reaction a 1,2-diacyl-sn-glycero-3-phospho-N,N-dimethylethanolamine + S-adenosyl-L-methionine = a 1,2-diacyl-sn-glycero-3-phosphocholine + S-adenosyl-L-homocysteine + H(+). The catalysed reaction is a 1,2-diacyl-sn-glycero-3-phosphoethanolamine + S-adenosyl-L-methionine = a 1,2-diacyl-sn-glycero-3-phospho-N-methylethanolamine + S-adenosyl-L-homocysteine + H(+). It functions in the pathway phospholipid metabolism; phosphatidylcholine biosynthesis. In terms of biological role, catalyzes the three sequential steps of the methylation pathway of phosphatidylcholine biosynthesis, the SAM-dependent methylation of phosphatidylethanolamine (PE) to phosphatidylmonomethylethanolamine (PMME), PMME to phosphatidyldimethylethanolamine (PDME), and PDME to phosphatidylcholine (PC). This is Phosphatidylethanolamine N-methyltransferase B (pemtB) from Dictyostelium discoideum (Social amoeba).